A 191-amino-acid polypeptide reads, in one-letter code: uncharacterized protein (191 aa).

The first 22 residues, 1 to 22 (MKSLRLMLCAMPLMLTGCSTMS), serve as a signal peptide directing secretion.

This is an uncharacterized protein from Escherichia coli (strain K12).